Consider the following 457-residue polypeptide: Probable mitochondrial-processing peptidase subunit beta (457 aa).

H66 contacts Zn(2+). The active-site Proton acceptor is the E69. Zn(2+)-binding residues include H70 and E146.

The protein belongs to the peptidase M16 family. In terms of assembly, heterodimer of mas2 (alpha) and qcr1 (beta) subunits, forming the mitochondrial processing protease (MPP) in which mas2 is involved in substrate recognition and binding and qcr1 is the catalytic subunit. Requires Zn(2+) as cofactor.

It is found in the mitochondrion matrix. The enzyme catalyses Release of N-terminal transit peptides from precursor proteins imported into the mitochondrion, typically with Arg in position P2.. With respect to regulation, binding to mas2 is required for catalytic activity. Functionally, catalytic subunit of the essential mitochondrial processing protease (MPP), which cleaves the mitochondrial sequence off newly imported precursors proteins. Preferentially, cleaves after an arginine at position P2. The sequence is that of Probable mitochondrial-processing peptidase subunit beta (qcr1) from Schizosaccharomyces pombe (strain 972 / ATCC 24843) (Fission yeast).